Here is a 146-residue protein sequence, read N- to C-terminus: Large ribosomal subunit protein bL9 (146 aa).

The protein belongs to the bacterial ribosomal protein bL9 family.

In terms of biological role, binds to the 23S rRNA. This chain is Large ribosomal subunit protein bL9, found in Flavobacterium johnsoniae (strain ATCC 17061 / DSM 2064 / JCM 8514 / BCRC 14874 / CCUG 350202 / NBRC 14942 / NCIMB 11054 / UW101) (Cytophaga johnsonae).